We begin with the raw amino-acid sequence, 963 residues long: Ubiquitin carboxyl-terminal hydrolase 4 (963 aa).

The DUSP domain occupies 11–122 (PDAETQKSEL…GQQPIVRKVV (112 aa)). A necessary for interaction with SART3 region spans residues 27 to 216 (TLQRGAQWYL…LYLGQVLVIE (190 aa)). A Nuclear export signal motif is present at residues 133-141 (VEVYLLELK). Residues 142–226 (LCENSDPTNV…PQNEDGTWPR (85 aa)) form the Ubiquitin-like 1 domain. The tract at residues 220-255 (EDGTWPRQTLQSKSSTAPSRNFTTSPKSSASPYSSV) is disordered. The span at 225–243 (PRQTLQSKSSTAPSRNFTT) shows a compositional bias: polar residues. Residues 229–295 (LQSKSSTAPS…SYNCQEPPSS (67 aa)) form a required for USP4 activation by providing conformational flexibility between the DUSP and catalytic domains region. The span at 244–255 (SPKSSASPYSSV) shows a compositional bias: low complexity. One can recognise a USP domain in the interval 302–923 (CGLGNLGNTC…AAYVLFYQRR (622 aa)). Cysteine 311 (nucleophile) is an active-site residue. The segment at 384–386 (PQF) is regulates ubiquitin dissociation. Positions 405-407 (LHE) are necessary for interaction with RBL2. Residue serine 445 is modified to Phosphoserine. Positions 459-463 (LVCPE) are necessary for interaction with RB1 and RBL2. Residues cysteine 461 and cysteine 464 each coordinate Zn(2+). The Ubiquitin-like 2 domain occupies 483-571 (LKKDRVMEVF…IFVYEVCSTS (89 aa)). An interacts with DUSP and ubiquitin-like 1 domains and is required for USP4 activation region spans residues 485-775 (KDRVMEVFLV…LQPQKKKKTT (291 aa)). The interval 637–698 (DEFGSSPLEP…PSETTQKKIK (62 aa)) is disordered. Phosphoserine is present on serine 655. Positions 657–666 (EGEDEEEMEH) are enriched in acidic residues. Phosphoserine is present on residues serine 675 and serine 680. A Nuclear localization signal motif is present at residues 767–772 (QPQKKK). Zn(2+)-binding residues include cysteine 799 and cysteine 802. The active-site Proton acceptor is the histidine 881. The segment at 928 to 963 (YKTPSLSSSGSSDGGTRPSSSQQGLGDDEACSMDTN) is disordered. Residues 932-948 (SLSSSGSSDGGTRPSSS) are compositionally biased toward low complexity. Residues 953-963 (GDDEACSMDTN) show a composition bias toward acidic residues.

The protein belongs to the peptidase C19 family. USP4 subfamily. In terms of assembly, interacts with RB1 (both dephosphorylated and hypophosphorylated forms). Interacts with RBL1 and RBL2. Interacts with ADORA2A (via cytoplasmic C-terminus); the interaction is direct. Interacts with SART3; recruits USP4 to its substrate PRPF3. Post-translationally, phosphorylated at Ser-445 by PKB/AKT1 in response to EGF stimulus, promoting its ability deubiquitinate RHEB. In terms of processing, monoubiquitinated by TRIM21. Ubiquitination does not lead to its proteasomal degradation. Autodeubiquitinated.

The protein resides in the cytoplasm. Its subcellular location is the nucleus. The enzyme catalyses Thiol-dependent hydrolysis of ester, thioester, amide, peptide and isopeptide bonds formed by the C-terminal Gly of ubiquitin (a 76-residue protein attached to proteins as an intracellular targeting signal).. Its activity is regulated as follows. The completion of the deubiquitinase reaction is mediated by the DUSP and ubiquitin-like 1 domains which promotes the release of ubiquitin from the catalytic site enabling subsequent reactions to occur. Functionally, deubiquitinating enzyme that removes conjugated ubiquitin from target proteins. Deubiquitinates PDPK1. Deubiquitinates TRIM21. Deubiquitinates receptor ADORA2A which increases the amount of functional receptor at the cell surface. Deubiquitinates HAS2. Deubiquitinates RHEB in response to EGF signaling, promoting mTORC1 signaling. May regulate mRNA splicing through deubiquitination of the U4 spliceosomal protein PRPF3. This may prevent its recognition by the U5 component PRPF8 thereby destabilizing interactions within the U4/U6.U5 snRNP. May also play a role in the regulation of quality control in the ER. The chain is Ubiquitin carboxyl-terminal hydrolase 4 (USP4) from Pongo abelii (Sumatran orangutan).